The following is a 366-amino-acid chain: Palmitoyltransferase ZDHHC2 (366 aa).

At 1-15 (MAPSGPGGVRRRCRR) the chain is on the cytoplasmic side. The chain crosses the membrane as a helical span at residues 16-36 (VLYWIPVVFISLLLGWSYYAY). The Lumenal segment spans residues 37–47 (AIQLCIVSMEN). Residues 48 to 68 (IGEQVVCLMAYHLLFAMFVWS) form a helical membrane-spanning segment. Topologically, residues 69 to 169 (YWKTIFTLPM…NNCVGFSNYK (101 aa)) are cytoplasmic. The DHHC domain occupies 126–176 (RYCDRCRLIKPDRCHHCSVCDKCILKMDHHCPWVNNCVGFSNYKFFLLFLA). Cysteine 156 serves as the catalytic S-palmitoyl cysteine intermediate. Residues 170–190 (FFLLFLAYSLLYCLFIAATDL) form a helical membrane-spanning segment. Residues 191 to 207 (QYFIRFWTNGLPDTQAK) lie on the Lumenal side of the membrane. A helical transmembrane segment spans residues 208 to 228 (FHIMFLFFAAAMFSVSLSSLF). At 229–366 (GYHCWLVSKN…NPALTMENET (138 aa)) the chain is on the cytoplasmic side. Composition is skewed to polar residues over residues 297-316 (VNQDPEQPSTPAGLNSTAKN) and 332-349 (SHLLTDSQTWTENSSNSG). Positions 297–366 (VNQDPEQPST…NPALTMENET (70 aa)) are disordered. The mediates localization to plasma membrane and recycling endosomes stretch occupies residues 298–366 (NQDPEQPSTP…NPALTMENET (69 aa)). Residues 334 to 335 (LL) carry the Non-canonical dileucine endocytic signal motif. The NPxY-like endocytic signal motif lies at 357–360 (NPAL).

Belongs to the DHHC palmitoyltransferase family. In terms of assembly, monomer. Homodimer. The monomeric form has a higher catalytic activity. In terms of processing, autopalmitoylated.

The protein localises to the postsynaptic density. It is found in the postsynaptic recycling endosome membrane. The protein resides in the cell membrane. Its subcellular location is the endoplasmic reticulum membrane. It localises to the golgi apparatus membrane. The catalysed reaction is L-cysteinyl-[protein] + hexadecanoyl-CoA = S-hexadecanoyl-L-cysteinyl-[protein] + CoA. It carries out the reaction L-cysteinyl-[protein] + tetradecanoyl-CoA = S-tetradecanoyl-L-cysteinyl-[protein] + CoA. It catalyses the reaction L-cysteinyl-[protein] + octadecanoyl-CoA = S-octadecanoyl-L-cysteinyl-[protein] + CoA. Functionally, palmitoyltransferase that catalyzes the addition of palmitate onto various protein substrates and is involved in a variety of cellular processes. Has no stringent fatty acid selectivity and in addition to palmitate can also transfer onto target proteins myristate from tetradecanoyl-CoA and stearate from octadecanoyl-CoA. In the nervous system, plays a role in long term synaptic potentiation by palmitoylating AKAP5 through which it regulates protein trafficking from the dendritic recycling endosomes to the plasma membrane and controls both structural and functional plasticity at excitatory synapses. In dendrites, mediates the palmitoylation of DLG4 when synaptic activity decreases and induces synaptic clustering of DLG4 and associated AMPA-type glutamate receptors. Also mediates the de novo and turnover palmitoylation of RGS7BP, a shuttle for Gi/o-specific GTPase-activating proteins/GAPs, promoting its localization to the plasma membrane in response to the activation of G protein-coupled receptors. Through the localization of these GTPase-activating proteins/GAPs, it also probably plays a role in G protein-coupled receptors signaling in neurons. Also probably plays a role in cell adhesion by palmitoylating CD9 and CD151 to regulate their expression and function. Palmitoylates the endoplasmic reticulum protein CKAP4 and regulates its localization to the plasma membrane. Could also palmitoylate LCK and regulate its localization to the plasma membrane. This is Palmitoyltransferase ZDHHC2 from Rattus norvegicus (Rat).